Reading from the N-terminus, the 161-residue chain is Calcium-binding protein CML24 (161 aa).

EF-hand domains lie at glycine 13–threonine 48, alanine 49–glycine 84, asparagine 90–lysine 125, and cysteine 126–alanine 161. Ca(2+)-binding residues include aspartate 26, asparagine 28, aspartate 30, lysine 32, glutamate 37, aspartate 62, aspartate 64, asparagine 66, glutamate 73, aspartate 103, aspartate 105, asparagine 107, arginine 109, glutamate 114, aspartate 139, aspartate 141, aspartate 143, cysteine 145, and glutamate 150.

As to expression, expressed in seed coat, seedling radical, cotyledons, hypocotyl, shoot apex and elongating root. Expressed in the vasculature of cotyledons, leaves and roots. Highly expressed in guard cells, trichomes and hydathodes. Expressed in inflorescence stem branch points, silique abscission zone, young and mature styles and stigmatic papillae, mature anthers and developing seed.

Calcium-binding protein that may positively regulate abscisic acid (ABA) inhibition of germination and seedling development. May be required for photoperiod-induced flowering and function in ion homeostasis. The protein is Calcium-binding protein CML24 (CML24) of Arabidopsis thaliana (Mouse-ear cress).